We begin with the raw amino-acid sequence, 1060 residues long: Protein transport protein Sec16B (1060 aa).

Residues 1-86 (MELWAPQRLP…GDWHQPVSGV (86 aa)) are disordered. A required for endoplasmic reticulum localization region spans residues 34-224 (RPVPHSWHNG…PSLASESNLL (191 aa)). Over residues 41–50 (HNGERFHQWQ) the composition is skewed to basic and acidic residues. Residues 51-60 (DNRGSPQPQQ) are compositionally biased toward polar residues. S55, S143, S167, S188, and S191 each carry phosphoserine. Disordered regions lie at residues 163-236 (ENQH…SSSY), 245-264 (APER…QADV), 711-733 (KVAG…GGTT), 770-796 (PSPQ…GTPR), and 834-1060 (PGEN…TQPC). Polar residues-rich tracts occupy residues 165–195 (QHSP…NSGQ) and 213–222 (NKPSLASESN). Positions 223–236 (LLQQRESGLSSSSY) are enriched in low complexity. Phosphoserine is present on residues S254 and S258. Residues 271–713 (APMKFYIPHV…LRRQLEQKVA (443 aa)) are central conserved domain (CCD); required for localization to endoplasmic reticulum exit sites. A compositionally biased stretch (polar residues) spans 837–847 (NTVSQETSQPP). A Phosphothreonine modification is found at T858. S868, S871, S874, S882, and S883 each carry phosphoserine. Composition is skewed to basic and acidic residues over residues 875-890 (AKED…DKNS) and 899-908 (KLGDGKEHTK). A compositionally biased stretch (low complexity) spans 909–918 (SSGFGWFSWF). Over residues 930 to 941 (GDEDSSDSPDSE) the composition is skewed to acidic residues. Over residues 991–1001 (AAAGAGVGGLS) the composition is skewed to gly residues. Residues 1031–1046 (NPSQVPQLPTATSLNR) are compositionally biased toward polar residues.

The protein belongs to the SEC16 family. SEC16A and SEC16B are each present in multiple copies in a heteromeric complex. Interacts with TFG. Interacts with SEC13. Ubiquitous.

The protein localises to the endoplasmic reticulum membrane. It localises to the golgi apparatus membrane. Its function is as follows. Plays a role in the organization of the endoplasmic reticulum exit sites (ERES), also known as transitional endoplasmic reticulum (tER). Required for secretory cargo traffic from the endoplasmic reticulum to the Golgi apparatus. Involved in peroxisome biogenesis. Regulates the transport of peroxisomal biogenesis factors PEX3 and PEX16 from the ER to peroxisomes. This chain is Protein transport protein Sec16B (SEC16B), found in Homo sapiens (Human).